A 212-amino-acid polypeptide reads, in one-letter code: Ribonuclease HII (212 aa).

The RNase H type-2 domain occupies 20–209 (TCIVGVDEVG…VHNILYQEAS (190 aa)). Aspartate 26, glutamate 27, and aspartate 117 together coordinate a divalent metal cation.

Belongs to the RNase HII family. Requires Mn(2+) as cofactor. Mg(2+) serves as cofactor.

Its subcellular location is the cytoplasm. The catalysed reaction is Endonucleolytic cleavage to 5'-phosphomonoester.. Its function is as follows. Endonuclease that specifically degrades the RNA of RNA-DNA hybrids. The polypeptide is Ribonuclease HII (Cereibacter sphaeroides (strain ATCC 17025 / ATH 2.4.3) (Rhodobacter sphaeroides)).